The chain runs to 280 residues: Ribosomal RNA small subunit methyltransferase A (280 aa).

The S-adenosyl-L-methionine site is built by Asn-27, Leu-29, Gly-54, Glu-76, Asp-102, and Asn-122.

Belongs to the class I-like SAM-binding methyltransferase superfamily. rRNA adenine N(6)-methyltransferase family. RsmA subfamily.

Its subcellular location is the cytoplasm. The catalysed reaction is adenosine(1518)/adenosine(1519) in 16S rRNA + 4 S-adenosyl-L-methionine = N(6)-dimethyladenosine(1518)/N(6)-dimethyladenosine(1519) in 16S rRNA + 4 S-adenosyl-L-homocysteine + 4 H(+). Functionally, specifically dimethylates two adjacent adenosines (A1518 and A1519) in the loop of a conserved hairpin near the 3'-end of 16S rRNA in the 30S particle. May play a critical role in biogenesis of 30S subunits. The polypeptide is Ribosomal RNA small subunit methyltransferase A (Oleidesulfovibrio alaskensis (strain ATCC BAA-1058 / DSM 17464 / G20) (Desulfovibrio alaskensis)).